The chain runs to 286 residues: 3-hydroxyanthranilate 3,4-dioxygenase (286 aa).

The interval 1–160 (MERCVRVKSW…SEQYRTGKPN (160 aa)) is domain A (catalytic). R43 is a binding site for O2. Residues H47, E53, and H91 each coordinate Fe cation. E53 serves as a coordination point for substrate. The substrate site is built by R95 and E105. A linker region spans residues 161-177 (PDQLLKEPPFPLSTRSV). Residues 178–286 (MEPMSLKAWL…QDPACKKPLG (109 aa)) form a domain B region.

Belongs to the 3-HAO family. Monomer. Fe(2+) is required as a cofactor.

It localises to the cytoplasm. Its subcellular location is the cytosol. It catalyses the reaction 3-hydroxyanthranilate + O2 = (2Z,4Z)-2-amino-3-carboxymuconate 6-semialdehyde. It participates in cofactor biosynthesis; NAD(+) biosynthesis; quinolinate from L-kynurenine: step 3/3. Catalyzes the oxidative ring opening of 3-hydroxyanthranilate to 2-amino-3-carboxymuconate semialdehyde, which spontaneously cyclizes to quinolinate. The polypeptide is 3-hydroxyanthranilate 3,4-dioxygenase (Haao) (Rattus norvegicus (Rat)).